The chain runs to 201 residues: Large ribosomal subunit protein uL4 (201 aa).

A disordered region spans residues 45 to 73 (AQKTRAEVTGSGKKPWRQKGTGRARAGSV).

The protein belongs to the universal ribosomal protein uL4 family. Part of the 50S ribosomal subunit.

In terms of biological role, one of the primary rRNA binding proteins, this protein initially binds near the 5'-end of the 23S rRNA. It is important during the early stages of 50S assembly. It makes multiple contacts with different domains of the 23S rRNA in the assembled 50S subunit and ribosome. Functionally, forms part of the polypeptide exit tunnel. This chain is Large ribosomal subunit protein uL4, found in Yersinia pseudotuberculosis serotype O:1b (strain IP 31758).